Consider the following 153-residue polypeptide: Facilitator of iron transport 2 (153 aa).

The signal sequence occupies residues 1–18 (MKFSTIFGATTVMTAVSA). The tract at residues 73–98 (TEGPDTTSEKSTTKTLTLTNGSGSST) is disordered. Low complexity predominate over residues 85-98 (TKTLTLTNGSGSST). An N-linked (GlcNAc...) asparagine glycan is attached at Asn-92. Residue Gly-130 is the site of GPI-anchor amidated glycine attachment. Residues 131-153 (AAPAAFQGASVGALALGLISYLL) constitute a propeptide, removed in mature form.

Post-translationally, the GPI-anchor is attached to the protein in the endoplasmic reticulum and serves to target the protein to the cell surface. There, the glucosamine-inositol phospholipid moiety is cleaved off and the GPI-modified mannoprotein is covalently attached via its lipidless GPI glycan remnant to the 1,6-beta-glucan of the outer cell wall layer.

Its subcellular location is the secreted. The protein localises to the cell wall. It is found in the membrane. Its function is as follows. Involved in the uptake of non-siderophore and siderophore sources of iron. Has a role in the retention of iron in the cell wall and periplasmic space. In Saccharomyces cerevisiae (strain ATCC 204508 / S288c) (Baker's yeast), this protein is Facilitator of iron transport 2 (FIT2).